The primary structure comprises 224 residues: 7-cyano-7-deazaguanine synthase (224 aa).

9-19 contacts ATP; it reads ISGGMDSTLCA. Residues Cys190, Cys198, Cys201, and Cys204 each contribute to the Zn(2+) site.

Belongs to the QueC family. Zn(2+) serves as cofactor.

It carries out the reaction 7-carboxy-7-deazaguanine + NH4(+) + ATP = 7-cyano-7-deazaguanine + ADP + phosphate + H2O + H(+). It participates in purine metabolism; 7-cyano-7-deazaguanine biosynthesis. Functionally, catalyzes the ATP-dependent conversion of 7-carboxy-7-deazaguanine (CDG) to 7-cyano-7-deazaguanine (preQ(0)). The protein is 7-cyano-7-deazaguanine synthase of Campylobacter jejuni subsp. jejuni serotype O:6 (strain 81116 / NCTC 11828).